Consider the following 370-residue polypeptide: Peptidyl-prolyl cis-trans isomerase D (370 aa).

Residues Phe11–Glu176 form the PPIase cyclophilin-type domain. TPR repeat units follow at residues Val218–Tyr251, Leu269–Asp302, and Thr307–Asp340.

This sequence belongs to the cyclophilin-type PPIase family. PPIase D subfamily.

The protein resides in the cytoplasm. It carries out the reaction [protein]-peptidylproline (omega=180) = [protein]-peptidylproline (omega=0). Functionally, PPIases accelerate the folding of proteins. It catalyzes the cis-trans isomerization of proline imidic peptide bonds in oligopeptides. The protein is Peptidyl-prolyl cis-trans isomerase D (CPR6) of Debaryomyces hansenii (strain ATCC 36239 / CBS 767 / BCRC 21394 / JCM 1990 / NBRC 0083 / IGC 2968) (Yeast).